A 327-amino-acid polypeptide reads, in one-letter code: MSEIKTDDPKRGIKLRGADKTARIPIKVVPLQEKLKKPEWIRAKLPSRKFFEIKDILREQKMHTVCEEASCPNIGECFSKGTATFMIMGDICTRRCPFCDVGHGRPNMLDPDEPKNLAESVKAMNLRYVVITSVDRDDLRDGGAQHFADCIKAIRETSPNTKIEILVPDFRGRLDIALKILAETPPDVMNHNLETHPSLYRKARPGANYQHSLDLLKRYKEMMPHIPTKSGIMVGLGETDEDVREIMRDMRAHNIEMITIGQYLQPSDGHLPVLRYVTPEQFKIFEKEAYELGFSNAAIGAMVRSSYHADEQAAEALRESHGGCGHH.

7 residues coordinate [4Fe-4S] cluster: Cys-66, Cys-71, Cys-77, Cys-92, Cys-96, Cys-99, and Ser-306. The region spanning 78–295 (FSKGTATFMI…EKEAYELGFS (218 aa)) is the Radical SAM core domain.

Belongs to the radical SAM superfamily. Lipoyl synthase family. [4Fe-4S] cluster is required as a cofactor.

It localises to the cytoplasm. The enzyme catalyses [[Fe-S] cluster scaffold protein carrying a second [4Fe-4S](2+) cluster] + N(6)-octanoyl-L-lysyl-[protein] + 2 oxidized [2Fe-2S]-[ferredoxin] + 2 S-adenosyl-L-methionine + 4 H(+) = [[Fe-S] cluster scaffold protein] + N(6)-[(R)-dihydrolipoyl]-L-lysyl-[protein] + 4 Fe(3+) + 2 hydrogen sulfide + 2 5'-deoxyadenosine + 2 L-methionine + 2 reduced [2Fe-2S]-[ferredoxin]. It participates in protein modification; protein lipoylation via endogenous pathway; protein N(6)-(lipoyl)lysine from octanoyl-[acyl-carrier-protein]: step 2/2. Its function is as follows. Catalyzes the radical-mediated insertion of two sulfur atoms into the C-6 and C-8 positions of the octanoyl moiety bound to the lipoyl domains of lipoate-dependent enzymes, thereby converting the octanoylated domains into lipoylated derivatives. In Neisseria meningitidis serogroup A / serotype 4A (strain DSM 15465 / Z2491), this protein is Lipoyl synthase.